A 249-amino-acid chain; its full sequence is NAD kinase (249 aa).

Residue Asp-49 is the Proton acceptor of the active site. NAD(+) is bound by residues Asp-49–Gly-50, Arg-54, Asn-115–Glu-116, Lys-126, Arg-143, Asp-145, Ile-153, Thr-156–Ser-161, Ala-180, and Gln-211.

Belongs to the NAD kinase family. Homotetramer. A divalent metal cation is required as a cofactor.

It is found in the cytoplasm. The catalysed reaction is NAD(+) + ATP = ADP + NADP(+) + H(+). In terms of biological role, involved in the regulation of the intracellular balance between NAD(H) and NADP(H), and is a key enzyme in the biosynthesis of NADP. Catalyzes specifically the phosphorylation on 2'-hydroxyl of the adenosine moiety of NAD to yield NADP. The chain is NAD kinase from Archaeoglobus fulgidus (strain ATCC 49558 / DSM 4304 / JCM 9628 / NBRC 100126 / VC-16).